Here is a 474-residue protein sequence, read N- to C-terminus: tRNA-2-methylthio-N(6)-dimethylallyladenosine synthase (474 aa).

The region spanning 3 to 120 (KKLHIKTWGC…LPEMINSVRG (118 aa)) is the MTTase N-terminal domain. [4Fe-4S] cluster contacts are provided by C12, C49, C83, C157, C161, and C164. Positions 143–375 (RAEGPTAFVS…QERINQQAMA (233 aa)) constitute a Radical SAM core domain. Positions 378 to 441 (RRMLGTTQRI…PNSLRGKVVR (64 aa)) constitute a TRAM domain.

The protein belongs to the methylthiotransferase family. MiaB subfamily. As to quaternary structure, monomer. It depends on [4Fe-4S] cluster as a cofactor.

It localises to the cytoplasm. The catalysed reaction is N(6)-dimethylallyladenosine(37) in tRNA + (sulfur carrier)-SH + AH2 + 2 S-adenosyl-L-methionine = 2-methylsulfanyl-N(6)-dimethylallyladenosine(37) in tRNA + (sulfur carrier)-H + 5'-deoxyadenosine + L-methionine + A + S-adenosyl-L-homocysteine + 2 H(+). Catalyzes the methylthiolation of N6-(dimethylallyl)adenosine (i(6)A), leading to the formation of 2-methylthio-N6-(dimethylallyl)adenosine (ms(2)i(6)A) at position 37 in tRNAs that read codons beginning with uridine. In Shigella boydii serotype 18 (strain CDC 3083-94 / BS512), this protein is tRNA-2-methylthio-N(6)-dimethylallyladenosine synthase.